The primary structure comprises 229 residues: N-(5'-phosphoribosyl)anthranilate isomerase (229 aa).

It belongs to the TrpF family.

The enzyme catalyses N-(5-phospho-beta-D-ribosyl)anthranilate = 1-(2-carboxyphenylamino)-1-deoxy-D-ribulose 5-phosphate. Its pathway is amino-acid biosynthesis; L-tryptophan biosynthesis; L-tryptophan from chorismate: step 3/5. This is N-(5'-phosphoribosyl)anthranilate isomerase from Clostridium beijerinckii (strain ATCC 51743 / NCIMB 8052) (Clostridium acetobutylicum).